The following is a 301-amino-acid chain: Protease HtpX (301 aa).

A run of 2 helical transmembrane segments spans residues 4-24 and 38-58; these read IGLF…ILSL and LGNL…VSLF. Zn(2+) is bound at residue His-147. The active site involves Glu-148. A Zn(2+)-binding site is contributed by His-151. 2 helical membrane-spanning segments follow: residues 155-175 and 200-220; these read GDMV…MFFA and FIIT…IVMW. Position 226 (Glu-226) interacts with Zn(2+).

The protein belongs to the peptidase M48B family. Zn(2+) serves as cofactor.

It localises to the cell inner membrane. This is Protease HtpX from Acinetobacter baumannii (strain AB307-0294).